The chain runs to 702 residues: Elongation factor G (702 aa).

Residues 8 to 286 (DKVRNIGIIA…AVVEYLPSPL (279 aa)) enclose the tr-type G domain. Residues 17 to 24 (AHIDAGKT), 85 to 89 (DTPGH), and 139 to 142 (NKMD) contribute to the GTP site.

This sequence belongs to the TRAFAC class translation factor GTPase superfamily. Classic translation factor GTPase family. EF-G/EF-2 subfamily.

The protein localises to the cytoplasm. In terms of biological role, catalyzes the GTP-dependent ribosomal translocation step during translation elongation. During this step, the ribosome changes from the pre-translocational (PRE) to the post-translocational (POST) state as the newly formed A-site-bound peptidyl-tRNA and P-site-bound deacylated tRNA move to the P and E sites, respectively. Catalyzes the coordinated movement of the two tRNA molecules, the mRNA and conformational changes in the ribosome. The chain is Elongation factor G from Chloroflexus aggregans (strain MD-66 / DSM 9485).